A 316-amino-acid chain; its full sequence is MARYTNSLKIFTGNSNPKLASEIAEHLGLKLADSEVGTFSDGEISVRIGESVRGASVFVIQSTCAPVNNNLMELLIMIDAFKRASAAEINAVIPYYGYARQDRKAKARDPITAKLVADLITAAGAHRVVTMDLHAPQIQGYFNIPVDHLLGGPILAKYFMDKELGDDVVVVSPDHGSVTRARYFAEKLNAPLAIIDKRRPKANVAEVMNIIGDVKGKKAILVDDLIDTAGTLVQAAEALLDHGAVEIYACATHGVLSGPAIERLKESPIKEVVITDTIPLPEEKKIDKIKVRSVAPLFAEAILRIHEGMSVSKLFT.

ATP is bound by residues aspartate 41–glutamate 43 and arginine 100–glutamine 101. Positions 134 and 174 each coordinate Mg(2+). Lysine 197 is an active-site residue. Residues arginine 199, aspartate 223, and aspartate 227–threonine 231 each bind D-ribose 5-phosphate.

It belongs to the ribose-phosphate pyrophosphokinase family. Class I subfamily. As to quaternary structure, homohexamer. Requires Mg(2+) as cofactor.

The protein resides in the cytoplasm. The enzyme catalyses D-ribose 5-phosphate + ATP = 5-phospho-alpha-D-ribose 1-diphosphate + AMP + H(+). It functions in the pathway metabolic intermediate biosynthesis; 5-phospho-alpha-D-ribose 1-diphosphate biosynthesis; 5-phospho-alpha-D-ribose 1-diphosphate from D-ribose 5-phosphate (route I): step 1/1. Involved in the biosynthesis of the central metabolite phospho-alpha-D-ribosyl-1-pyrophosphate (PRPP) via the transfer of pyrophosphoryl group from ATP to 1-hydroxyl of ribose-5-phosphate (Rib-5-P). The chain is Ribose-phosphate pyrophosphokinase from Caldanaerobacter subterraneus subsp. tengcongensis (strain DSM 15242 / JCM 11007 / NBRC 100824 / MB4) (Thermoanaerobacter tengcongensis).